The chain runs to 494 residues: MHVQSKAPKDLHPQAQMTMLQRLYKLGDMFTVDTWPLMDQMYLVANPKLAHQVSQDSSPFPKHPMITRFLKPLTGYNSVLAANDAKWKELRSLFAPGFSNAHLMTMVPLMVEKTEVFCDLLSEYAAKHELFSMEPMAARLTIDIIGIVVLGVDFKSLTRRDELVEAFRHLLDLLPNGQTLDINPVTHYLRRKYANTMDNYIRRVLRDRAANGANKKFRTLMDIAIERYEQLPNGSLFDCGFEQLAVDNLKTFVFAGHDTSSTTLSNIYHLLSKHPEVLAKVIEEHDQVLGKDTAAIGQLIRDQPSIINKLPYTTAVIRETLRLYPASGSLRMAPKDTTFHPDKAPAVTVPKGSLIWVGIHTIHHDAEFFPCPDEFHPERFMTAKTITLADGRTEAVTAGWNGHAPPADAYRPFEKGPRMCIGSEMAMIEIRVVLAMTLRRFRFESAYAEYRRRHPDEVEAAGGRTEAFGDEAYQVFSSTAKPKSGVPMYVYTKE.

Position 420 (C420) interacts with heme.

This sequence belongs to the cytochrome P450 family. It depends on heme as a cofactor.

It participates in secondary metabolite biosynthesis. In terms of biological role, cytochrome P450 monooxygenase; part of the cluster that mediates the biosynthesis of acurin A, a highly reduced polyketide coupled to a serine via a peptide bond. The activities of the highly reducing polyketide synthase acrA and the nonribosomal peptide synthetase acrB are collectively responsible for the synthesis of the acurin A core structure with a heptaketide backbone produced by acrA covalently fused to a L-serine by acrB. After the formation of the PK-NRP hybrid product, it is detached from acrB by reductive release to set up the formation of the lactam ring by aldol condensation. The hydrolyase acrC then catalyzes water loss to generate a double bond in the ring. This double bond is probably reduced, which is followed by three oxidations at C-22 to generate the carboxylic acid moiety, involving probably the FAD-binding monooxygenase acrE and the cytochrome P450 monooxygenases acrD and acrF. Finally, a last methylation step performed by the O-methyltransferase acrG leads to the production of acurin A. This chain is Cytochrome P450 monooxygenase acrF, found in Aspergillus aculeatus (strain ATCC 16872 / CBS 172.66 / WB 5094).